The following is a 201-amino-acid chain: Large ribosomal subunit protein uL4 (201 aa).

Positions Ala39–Arg67 are disordered.

This sequence belongs to the universal ribosomal protein uL4 family. In terms of assembly, part of the 50S ribosomal subunit.

One of the primary rRNA binding proteins, this protein initially binds near the 5'-end of the 23S rRNA. It is important during the early stages of 50S assembly. It makes multiple contacts with different domains of the 23S rRNA in the assembled 50S subunit and ribosome. In terms of biological role, forms part of the polypeptide exit tunnel. The protein is Large ribosomal subunit protein uL4 of Marinomonas sp. (strain MWYL1).